Reading from the N-terminus, the 452-residue chain is Inner membrane metabolite transport protein YdjE (452 aa).

Residues 1-20 (MEQYDQIGARLDRLPLARFH) are Cytoplasmic-facing. Residues 21 to 43 (YRIFGIISFSLLLTGFLSYSGNV) traverse the membrane as a helical segment. Residues 44–57 (VLAKLVSNGWSNNF) lie on the Periplasmic side of the membrane. A helical transmembrane segment spans residues 58-80 (LNAAFTSALMFGYFIGSLTGGFI). Residues 81 to 91 (GDYFGRRRAFR) are Cytoplasmic-facing. A helical transmembrane segment spans residues 92–114 (INLLIVGIAATGAAFVPDMYWLI). Residues 115-117 (FFR) are Periplasmic-facing. Residues 118-140 (FLMGTGMGALIMVGYASFTEFIP) form a helical membrane-spanning segment. Over 141 to 152 (ATVRGKWSARLS) the chain is Cytoplasmic. The helical transmembrane segment at 153 to 175 (FVGNWSPMLSAAIGVVVIAFFSW) threads the bilayer. Over 176–178 (RIM) the chain is Periplasmic. The chain crosses the membrane as a helical span at residues 179 to 198 (FLLGGIGILLAWFLSGKYFI). Residues 199–265 (ESPRWLAGKG…KGEMLRRTLV (67 aa)) lie on the Cytoplasmic side of the membrane. The chain crosses the membrane as a helical span at residues 266 to 288 (AITVLIAMNISLYTITVWIPTIF). Topologically, residues 289 to 297 (VNSGIDVDK) are periplasmic. The helical transmembrane segment at 298-320 (SILMTAVIMIGAPVGIFIAALII) threads the bilayer. Over 321-326 (DHFPRR) the chain is Cytoplasmic. Residues 327-344 (LFGSTLLIIIAVLGYIYS) traverse the membrane as a helical segment. Over 345 to 353 (IQTTEWAIL) the chain is Periplasmic. Residues 354-376 (IYGLVMIFFLYMYVCFASAVYIP) form a helical membrane-spanning segment. Residues 377-388 (ELWPTHLRLRGS) lie on the Cytoplasmic side of the membrane. The chain crosses the membrane as a helical span at residues 389–411 (GFVNAVGRIVAVFTPYGVAALLT). Topologically, residues 412–415 (HYGS) are periplasmic. Residues 416-438 (ITVFMVLGVMLLLCALVLSIFGI) traverse the membrane as a helical segment. Residues 439–452 (ETRKVSLEEISEVN) are Cytoplasmic-facing.

This sequence belongs to the major facilitator superfamily. Sugar transporter (TC 2.A.1.1) family.

The protein localises to the cell inner membrane. This is Inner membrane metabolite transport protein YdjE (ydjE) from Escherichia coli (strain K12).